Here is a 336-residue protein sequence, read N- to C-terminus: Tryptophan--tRNA ligase (336 aa).

ATP-binding positions include Gln15–Thr17 and Gly24–Asn25. Positions Pro16–Asn25 match the 'HIGH' region motif. Asp141 is a binding site for L-tryptophan. Residues Gly153–Asp155, Ile192, and Lys201–Ser205 each bind ATP. The 'KMSKS' region signature appears at Lys201–Ser205.

This sequence belongs to the class-I aminoacyl-tRNA synthetase family. As to quaternary structure, homodimer.

Its subcellular location is the cytoplasm. It catalyses the reaction tRNA(Trp) + L-tryptophan + ATP = L-tryptophyl-tRNA(Trp) + AMP + diphosphate + H(+). In terms of biological role, catalyzes the attachment of tryptophan to tRNA(Trp). In Mycobacterium tuberculosis (strain CDC 1551 / Oshkosh), this protein is Tryptophan--tRNA ligase.